We begin with the raw amino-acid sequence, 462 residues long: tRNA modification GTPase MnmE (462 aa).

The (6S)-5-formyl-5,6,7,8-tetrahydrofolate site is built by Arg34, Glu92, and Lys131. Residues 227-386 form the TrmE-type G domain; sequence GLQVVIAGKP…LIDAITAHAG (160 aa). Position 237 (Asn237) interacts with K(+). Residues 237–242, 256–262, and 281–284 contribute to the GTP site; these read NAGKSS, TDIAGTT, and DTAG. Ser241 contacts Mg(2+). The K(+) site is built by Thr256, Ile258, and Thr261. Thr262 is a binding site for Mg(2+). Lys462 serves as a coordination point for (6S)-5-formyl-5,6,7,8-tetrahydrofolate.

It belongs to the TRAFAC class TrmE-Era-EngA-EngB-Septin-like GTPase superfamily. TrmE GTPase family. As to quaternary structure, homodimer. Heterotetramer of two MnmE and two MnmG subunits. K(+) serves as cofactor.

Its subcellular location is the cytoplasm. Functionally, exhibits a very high intrinsic GTPase hydrolysis rate. Involved in the addition of a carboxymethylaminomethyl (cmnm) group at the wobble position (U34) of certain tRNAs, forming tRNA-cmnm(5)s(2)U34. The polypeptide is tRNA modification GTPase MnmE (Acinetobacter baylyi (strain ATCC 33305 / BD413 / ADP1)).